The primary structure comprises 374 residues: Alanine racemase (374 aa).

Lys-35 serves as the catalytic Proton acceptor; specific for D-alanine. Lys-35 carries the post-translational modification N6-(pyridoxal phosphate)lysine. Position 133 (Arg-133) interacts with substrate. Tyr-264 acts as the Proton acceptor; specific for L-alanine in catalysis. Met-312 contacts substrate.

This sequence belongs to the alanine racemase family. It depends on pyridoxal 5'-phosphate as a cofactor.

It carries out the reaction L-alanine = D-alanine. It participates in amino-acid biosynthesis; D-alanine biosynthesis; D-alanine from L-alanine: step 1/1. Functionally, catalyzes the interconversion of L-alanine and D-alanine. May also act on other amino acids. This Thermobifida fusca (strain YX) protein is Alanine racemase (alr).